Here is a 194-residue protein sequence, read N- to C-terminus: Serine/threonine-protein kinase mos (194 aa).

A Protein kinase domain is found at 47–194; sequence LCLLHLLGSG…HLDLKPANIF (148 aa). ATP contacts are provided by residues 53–61 and Lys-74; that span reads LGSGGFGSV. Asp-187 functions as the Proton acceptor in the catalytic mechanism.

This sequence belongs to the protein kinase superfamily. Ser/Thr protein kinase family.

It catalyses the reaction L-seryl-[protein] + ATP = O-phospho-L-seryl-[protein] + ADP + H(+). The catalysed reaction is L-threonyl-[protein] + ATP = O-phospho-L-threonyl-[protein] + ADP + H(+). In Atheris squamigera (Variable bush viper), this protein is Serine/threonine-protein kinase mos (MOS).